Here is an 861-residue protein sequence, read N- to C-terminus: Bifunctional uridylyltransferase/uridylyl-removing enzyme (861 aa).

The tract at residues 1–321 is uridylyltransferase; the sequence is MKNDNRIIKN…VYHQKQKIIR (321 aa). The segment at 322–678 is uridylyl-removing; the sequence is LDDEFQLSNR…IMPHHSQGGT (357 aa). The 123-residue stretch at 440–562 folds into the HD domain; that stretch reads VDQHTLFVIR…LPHAKYLDYL (123 aa). ACT domains follow at residues 679 to 760 and 788 to 861; these read EVFI…AVSR and QLFL…KSKY.

Belongs to the GlnD family. Requires Mg(2+) as cofactor.

The enzyme catalyses [protein-PII]-L-tyrosine + UTP = [protein-PII]-uridylyl-L-tyrosine + diphosphate. It carries out the reaction [protein-PII]-uridylyl-L-tyrosine + H2O = [protein-PII]-L-tyrosine + UMP + H(+). With respect to regulation, uridylyltransferase (UTase) activity is inhibited by glutamine, while glutamine activates uridylyl-removing (UR) activity. Modifies, by uridylylation and deuridylylation, the PII regulatory proteins (GlnB and homologs), in response to the nitrogen status of the cell that GlnD senses through the glutamine level. Under low glutamine levels, catalyzes the conversion of the PII proteins and UTP to PII-UMP and PPi, while under higher glutamine levels, GlnD hydrolyzes PII-UMP to PII and UMP (deuridylylation). Thus, controls uridylylation state and activity of the PII proteins, and plays an important role in the regulation of nitrogen assimilation and metabolism. In Legionella pneumophila (strain Lens), this protein is Bifunctional uridylyltransferase/uridylyl-removing enzyme.